The primary structure comprises 97 residues: Coiled-coil domain-containing protein 167 (97 aa).

Positions 36–80 (LRKMELTEEGRKSLEKEKSSLSSRLSNYERELKSLRHENRKNMLL) form a coiled coil. The chain crosses the membrane as a helical span at residues 78–95 (MLLSVAIFLLFAVGYYCW).

It localises to the membrane. This is Coiled-coil domain-containing protein 167 (ccdc167) from Xenopus tropicalis (Western clawed frog).